We begin with the raw amino-acid sequence, 311 residues long: MSIQDLRDVKIITAMITPFKEDGSINFEVLPELIEHLLSHHTEGILLAGTTAESPTLTHEEELELFGAVQKIVNGRVPLIAGIGTNDTRDSIEFAKEVAAFGGFAAGLAIVPYYNKPSQEGMYQHFKAIADASDLPIIIYNIPGRVVVEMTPETMLRLAEHPNIIGVKECTSLANMAYLIEHKPEDFLIYTGEDGDAFHAMNLGADGVISVASHTNGDEMYEMFTAIEQQDIRTAAAIQRKFIPKVNALFSYPSPAPVKAVLNYLGFEVGPLRLPLVPCPEEDAKRIIKVVVDGDYEATKATVTGVVRPDY.

Threonine 51 lines the pyruvate pocket. Tyrosine 140 serves as the catalytic Proton donor/acceptor. Residue lysine 168 is the Schiff-base intermediate with substrate of the active site. Pyruvate is bound at residue isoleucine 209.

It belongs to the DapA family. Homotetramer; dimer of dimers.

It localises to the cytoplasm. It catalyses the reaction L-aspartate 4-semialdehyde + pyruvate = (2S,4S)-4-hydroxy-2,3,4,5-tetrahydrodipicolinate + H2O + H(+). Its pathway is amino-acid biosynthesis; L-lysine biosynthesis via DAP pathway; (S)-tetrahydrodipicolinate from L-aspartate: step 3/4. In terms of biological role, catalyzes the condensation of (S)-aspartate-beta-semialdehyde [(S)-ASA] and pyruvate to 4-hydroxy-tetrahydrodipicolinate (HTPA). In Streptococcus suis (strain 98HAH33), this protein is 4-hydroxy-tetrahydrodipicolinate synthase.